Consider the following 335-residue polypeptide: Eukaryotic translation initiation factor 3 subunit H-A (335 aa).

Positions 22–156 (IQVDGLVVLK…LKAYRLTPKL (135 aa)) constitute an MPN domain. Residues 254–272 (QQQKQQYQQRRQQENAQRQ) show a composition bias toward low complexity. The disordered stretch occupies residues 254–282 (QQQKQQYQQRRQQENAQRQSRGEPPLPEE).

It belongs to the eIF-3 subunit H family. Component of the eukaryotic translation initiation factor 3 (eIF-3) complex, which is composed of 13 subunits: eif3a, eif3b, eif3c, eif3d, eif3e, eif3f, eif3g, eif3h, eif3i, eif3j, eif3k, eif3l and eif3m.

It is found in the cytoplasm. Functionally, component of the eukaryotic translation initiation factor 3 (eIF-3) complex, which is involved in protein synthesis of a specialized repertoire of mRNAs and, together with other initiation factors, stimulates binding of mRNA and methionyl-tRNAi to the 40S ribosome. The eIF-3 complex specifically targets and initiates translation of a subset of mRNAs involved in cell proliferation. This Danio rerio (Zebrafish) protein is Eukaryotic translation initiation factor 3 subunit H-A (eif3ha).